A 291-amino-acid chain; its full sequence is Tyrosine recombinase XerA (291 aa).

The region spanning 9-102 (PESGDLYNAF…AVRRFLKWIN (94 aa)) is the Core-binding (CB) domain. Residues 115 to 279 (KEVKALDEIQ…VLDDLRNEYL (165 aa)) enclose the Tyr recombinase domain. Catalysis depends on residues R150, K175, H231, R234, and H257. Catalysis depends on Y266, which acts as the O-(3'-phospho-DNA)-tyrosine intermediate.

It belongs to the 'phage' integrase family. XerA subfamily.

It is found in the cytoplasm. In terms of biological role, site-specific tyrosine recombinase, which acts by catalyzing the cutting and rejoining of the recombining DNA molecules. Probably involved in the resolution of chromosome dimers. Binds to the dif site. In Saccharolobus solfataricus (strain ATCC 35092 / DSM 1617 / JCM 11322 / P2) (Sulfolobus solfataricus), this protein is Tyrosine recombinase XerA.